Here is a 689-residue protein sequence, read N- to C-terminus: Glycine--tRNA ligase beta subunit (689 aa).

It belongs to the class-II aminoacyl-tRNA synthetase family. As to quaternary structure, tetramer of two alpha and two beta subunits.

The protein localises to the cytoplasm. It carries out the reaction tRNA(Gly) + glycine + ATP = glycyl-tRNA(Gly) + AMP + diphosphate. The chain is Glycine--tRNA ligase beta subunit (glyS) from Pasteurella multocida (strain Pm70).